Reading from the N-terminus, the 332-residue chain is Homoserine kinase (332 aa).

This sequence belongs to the pseudomonas-type ThrB family.

The enzyme catalyses L-homoserine + ATP = O-phospho-L-homoserine + ADP + H(+). It participates in amino-acid biosynthesis; L-threonine biosynthesis; L-threonine from L-aspartate: step 4/5. This is Homoserine kinase from Burkholderia vietnamiensis (strain G4 / LMG 22486) (Burkholderia cepacia (strain R1808)).